Here is a 192-residue protein sequence, read N- to C-terminus: UPF0149 protein VIBHAR_03551 (192 aa).

Belongs to the UPF0149 family.

This chain is UPF0149 protein VIBHAR_03551, found in Vibrio campbellii (strain ATCC BAA-1116).